Here is a 777-residue protein sequence, read N- to C-terminus: Zygote defective protein 12 (777 aa).

Composition is skewed to basic and acidic residues over residues 1–10 and 18–36; these read MLDLTNKESE and KYED…PFKE. A disordered region spans residues 1-36; the sequence is MLDLTNKESESSDNGNSKYEDSIDGREVGTSKPFKE. The tract at residues 1–234 is interaction with dli-1; the sequence is MLDLTNKESE…ESSGKLNGNG (234 aa). In terms of domain architecture, Calponin-homology (CH) spans 44–169; that stretch reads QADLADMAVW…VTLAHIGKNA (126 aa). 2 disordered regions span residues 217-242 and 273-292; these read QSEL…RSNA and SFET…DISI. Positions 218–235 are enriched in low complexity; the sequence is SELNSLSESSGKLNGNGS. Coiled coils occupy residues 236–399 and 425–688; these read SERR…HHVK and NTEL…QENR. A compositionally biased stretch (polar residues) spans 273–288; the sequence is SFETAQHDMSSNSESG. Residues 747 to 767 traverse the membrane as a helical segment; the sequence is AMASILVLGFLVFIAWMFINI. The interval 749–777 is interaction with unc-84; that stretch reads ASILVLGFLVFIAWMFININSALNAPPNA.

The protein belongs to the hook family. Homodimer. Interacts with the dynein subunit dli-1 via its N-terminus. May interact with microtubules. Interacts with sut-2. Interacts (via C-terminus) with unc-84 (via C-terminus); the interaction is direct. As to expression, expressed in the syncytial gonad, oocytes, and in all cells during the development of the early embryo.

Its subcellular location is the nucleus membrane. The protein resides in the cytoplasm. It is found in the cytoskeleton. It localises to the microtubule organizing center. The protein localises to the centrosome. Its function is as follows. Cytoskeletal linker protein, which is essential for attachment of the centrosome to the nucleus. Required for dynein localization to the nuclear envelope. Forms a LINC (LInker of Nucleoskeleton and Cytoskeleton) complex together with unc-84, that may be involved in DNA damage repair. The sequence is that of Zygote defective protein 12 from Caenorhabditis elegans.